Reading from the N-terminus, the 225-residue chain is Ribose-5-phosphate isomerase A (225 aa).

Substrate-binding positions include 26–29, 82–85, and 95–98; these read TGST, DGAD, and KGGG. The Proton acceptor role is filled by Glu-104. Lys-122 provides a ligand contact to substrate.

It belongs to the ribose 5-phosphate isomerase family. As to quaternary structure, homodimer.

It catalyses the reaction aldehydo-D-ribose 5-phosphate = D-ribulose 5-phosphate. The protein operates within carbohydrate degradation; pentose phosphate pathway; D-ribose 5-phosphate from D-ribulose 5-phosphate (non-oxidative stage): step 1/1. In terms of biological role, catalyzes the reversible conversion of ribose-5-phosphate to ribulose 5-phosphate. The polypeptide is Ribose-5-phosphate isomerase A (Streptococcus mutans serotype c (strain ATCC 700610 / UA159)).